The following is a 266-amino-acid chain: Glucosamine-6-phosphate deaminase (266 aa).

Asp-72 acts as the Proton acceptor; for enolization step in catalysis. Asp-141 (for ring-opening step) is an active-site residue. His-143 (proton acceptor; for ring-opening step) is an active-site residue. Catalysis depends on Glu-148, which acts as the For ring-opening step.

Belongs to the glucosamine/galactosamine-6-phosphate isomerase family. NagB subfamily. In terms of assembly, homohexamer.

The enzyme catalyses alpha-D-glucosamine 6-phosphate + H2O = beta-D-fructose 6-phosphate + NH4(+). Its pathway is amino-sugar metabolism; N-acetylneuraminate degradation; D-fructose 6-phosphate from N-acetylneuraminate: step 5/5. Allosterically activated by N-acetylglucosamine 6-phosphate (GlcNAc6P). Catalyzes the reversible isomerization-deamination of glucosamine 6-phosphate (GlcN6P) to form fructose 6-phosphate (Fru6P) and ammonium ion. The chain is Glucosamine-6-phosphate deaminase from Salmonella typhi.